A 306-amino-acid polypeptide reads, in one-letter code: MDLSVELFGIRFKNPVWVASGTFGYGVEAAEIYDISKLGAVVTKGLSLKERLGNETPRIVETPCGMLNSIGLQNPGVEKFLKEIYPKIKDVDTHFIANVFGETEEEYVEVCMALEDADKIVAYELNVSCPNVKKGGILFGHDPVILGNLVDRIKAKIKKPLLVKLSPNVTDVTEFAKVCIENGADGLVLINTLMGMKINIWKRKPDLATKTGGLSGPAILPIAVRMIYQVYEKFGDRIPIIGVGGITTWEDAMEHVMAGASAVQVGTANFYEPLAPLKVIEGIENFMKSQNIKDFKELIGIAHRVE.

FMN contacts are provided by residues serine 20 and 44-45; that span reads KG. Residues lysine 44 and 68–72 each bind substrate; that span reads NSIGL. FMN contacts are provided by asparagine 98 and asparagine 126. Asparagine 126 lines the substrate pocket. Cysteine 129 acts as the Nucleophile in catalysis. Residues lysine 164 and isoleucine 190 each coordinate FMN. Residue 191–192 participates in substrate binding; the sequence is NT. Residues glycine 216, 244–245, and 266–267 each bind FMN; these read GG and GT.

It belongs to the dihydroorotate dehydrogenase family. Type 1 subfamily. As to quaternary structure, homodimer. FMN serves as cofactor.

It is found in the cytoplasm. The enzyme catalyses (S)-dihydroorotate + fumarate = orotate + succinate. The protein operates within pyrimidine metabolism; UMP biosynthesis via de novo pathway. Catalyzes the conversion of dihydroorotate to orotate with fumarate as the electron acceptor. The polypeptide is Putative dihydroorotate dehydrogenase A (fumarate) (pyrD) (Aquifex aeolicus (strain VF5)).